The following is a 123-amino-acid chain: Small ribosomal subunit protein uS13 (123 aa).

The interval 95-123 (GLPVRGQKTKTNARTRKGPKRTVGRKKKK) is disordered. A compositionally biased stretch (basic residues) spans 101 to 123 (QKTKTNARTRKGPKRTVGRKKKK).

This sequence belongs to the universal ribosomal protein uS13 family. Part of the 30S ribosomal subunit. Forms a loose heterodimer with protein S19. Forms two bridges to the 50S subunit in the 70S ribosome.

Located at the top of the head of the 30S subunit, it contacts several helices of the 16S rRNA. In the 70S ribosome it contacts the 23S rRNA (bridge B1a) and protein L5 of the 50S subunit (bridge B1b), connecting the 2 subunits; these bridges are implicated in subunit movement. Contacts the tRNAs in the A and P-sites. The polypeptide is Small ribosomal subunit protein uS13 (Alkaliphilus metalliredigens (strain QYMF)).